The following is a 454-amino-acid chain: Asparagine--tRNA ligase (454 aa).

This sequence belongs to the class-II aminoacyl-tRNA synthetase family. Homodimer.

The protein resides in the cytoplasm. The enzyme catalyses tRNA(Asn) + L-asparagine + ATP = L-asparaginyl-tRNA(Asn) + AMP + diphosphate + H(+). This is Asparagine--tRNA ligase from Ureaplasma urealyticum serovar 10 (strain ATCC 33699 / Western).